The following is a 272-amino-acid chain: MTRQWETIREYKEIKYELYDGIAKVTINRPEVRNAFTPNTVQEMIDAFTRARDDQRISVIILTGEGDKAFCSGGDQKVRGHGGYVGDDQIPRLNVLDLQRLIRVIPKPVVAMVRGYAIGGGNVLNVVCDLTIAADNAIFGQTGPKVGSFDAGYGSGYLARIVGHKKAREIWYLCRQYNAQEALDMGLVNTVVPLDQVEDETVQWCQEMKQHSPTALRFLKAAMNADTDGLAGLQQMAGDATLLYYTTDEAKEGRDAFKEKRDPDFDQFPKFP.

Substrate-binding positions include Arg33, 72 to 76, Tyr84, 116 to 120, Thr142, Ser148, Tyr245, and Lys260; these read SGGDQ and YAIGG. 141-143 lines the hydrogencarbonate pocket; sequence QTG. A compositionally biased stretch (basic and acidic residues) spans 253-264; sequence GRDAFKEKRDPD. A disordered region spans residues 253-272; it reads GRDAFKEKRDPDFDQFPKFP.

This sequence belongs to the enoyl-CoA hydratase/isomerase family. MenB subfamily. Hydrogencarbonate is required as a cofactor.

The enzyme catalyses 2-succinylbenzoyl-CoA + H(+) = 1,4-dihydroxy-2-naphthoyl-CoA + H2O. Its pathway is quinol/quinone metabolism; 1,4-dihydroxy-2-naphthoate biosynthesis; 1,4-dihydroxy-2-naphthoate from chorismate: step 6/7. It participates in quinol/quinone metabolism; menaquinone biosynthesis. Functionally, converts o-succinylbenzoyl-CoA (OSB-CoA) to 1,4-dihydroxy-2-naphthoyl-CoA (DHNA-CoA). This chain is 1,4-dihydroxy-2-naphthoyl-CoA synthase, found in Staphylococcus saprophyticus subsp. saprophyticus (strain ATCC 15305 / DSM 20229 / NCIMB 8711 / NCTC 7292 / S-41).